We begin with the raw amino-acid sequence, 307 residues long: 4-diphosphocytidyl-2-C-methyl-D-erythritol kinase (307 aa).

Residue Lys9 is part of the active site. Residue 94–104 (PIGAGLAGGSS) participates in ATP binding. The active site involves Asp136.

The protein belongs to the GHMP kinase family. IspE subfamily.

It carries out the reaction 4-CDP-2-C-methyl-D-erythritol + ATP = 4-CDP-2-C-methyl-D-erythritol 2-phosphate + ADP + H(+). Its pathway is isoprenoid biosynthesis; isopentenyl diphosphate biosynthesis via DXP pathway; isopentenyl diphosphate from 1-deoxy-D-xylulose 5-phosphate: step 3/6. Functionally, catalyzes the phosphorylation of the position 2 hydroxy group of 4-diphosphocytidyl-2C-methyl-D-erythritol. This chain is 4-diphosphocytidyl-2-C-methyl-D-erythritol kinase, found in Synechococcus sp. (strain CC9902).